The primary structure comprises 557 residues: Dihydroxy-acid dehydratase (557 aa).

Asp-78 is a Mg(2+) binding site. A [2Fe-2S] cluster-binding site is contributed by Cys-119. 2 residues coordinate Mg(2+): Asp-120 and Lys-121. N6-carboxylysine is present on Lys-121. Residue Cys-192 participates in [2Fe-2S] cluster binding. Position 442 (Glu-442) interacts with Mg(2+). Catalysis depends on Ser-468, which acts as the Proton acceptor.

The protein belongs to the IlvD/Edd family. Homodimer. The cofactor is [2Fe-2S] cluster. Requires Mg(2+) as cofactor.

The catalysed reaction is (2R)-2,3-dihydroxy-3-methylbutanoate = 3-methyl-2-oxobutanoate + H2O. It catalyses the reaction (2R,3R)-2,3-dihydroxy-3-methylpentanoate = (S)-3-methyl-2-oxopentanoate + H2O. The protein operates within amino-acid biosynthesis; L-isoleucine biosynthesis; L-isoleucine from 2-oxobutanoate: step 3/4. Its pathway is amino-acid biosynthesis; L-valine biosynthesis; L-valine from pyruvate: step 3/4. Its function is as follows. Functions in the biosynthesis of branched-chain amino acids. Catalyzes the dehydration of (2R,3R)-2,3-dihydroxy-3-methylpentanoate (2,3-dihydroxy-3-methylvalerate) into 2-oxo-3-methylpentanoate (2-oxo-3-methylvalerate) and of (2R)-2,3-dihydroxy-3-methylbutanoate (2,3-dihydroxyisovalerate) into 2-oxo-3-methylbutanoate (2-oxoisovalerate), the penultimate precursor to L-isoleucine and L-valine, respectively. In Bacillus cereus (strain G9842), this protein is Dihydroxy-acid dehydratase.